A 1399-amino-acid polypeptide reads, in one-letter code: DNA-directed RNA polymerase subunit beta' (1399 aa).

Zn(2+) contacts are provided by Cys71, Cys73, Cys86, and Cys89. Mg(2+) is bound by residues Asp462, Asp464, and Asp466. The Zn(2+) site is built by Cys810, Cys884, Cys891, and Cys894. Residues 1379–1399 (KQAAIVPSQPEPQPLALPPAE) form a disordered region. Residues 1387–1399 (QPEPQPLALPPAE) are compositionally biased toward pro residues.

The protein belongs to the RNA polymerase beta' chain family. As to quaternary structure, the RNAP catalytic core consists of 2 alpha, 1 beta, 1 beta' and 1 omega subunit. When a sigma factor is associated with the core the holoenzyme is formed, which can initiate transcription. The cofactor is Mg(2+). Requires Zn(2+) as cofactor.

It carries out the reaction RNA(n) + a ribonucleoside 5'-triphosphate = RNA(n+1) + diphosphate. Functionally, DNA-dependent RNA polymerase catalyzes the transcription of DNA into RNA using the four ribonucleoside triphosphates as substrates. This is DNA-directed RNA polymerase subunit beta' from Bradyrhizobium sp. (strain BTAi1 / ATCC BAA-1182).